A 174-amino-acid chain; its full sequence is Myosin regulatory light chain sqh (174 aa).

Phosphothreonine is present on Thr-21. Ser-22 bears the Phosphoserine mark. EF-hand domains lie at 31–66 (AQIA…LGKN) and 100–135 (DPED…MGDR). 4 residues coordinate Ca(2+): Asp-44, Asn-46, Asp-48, and Asp-55.

As to quaternary structure, myosin is a hexamer of 2 heavy chains and 4 light chains. In terms of processing, phosphorylation plays a central role in myosin regulation.

Its function is as follows. Required for cytokinesis, could regulate contractile ring function. The sequence is that of Myosin regulatory light chain sqh (sqh) from Drosophila melanogaster (Fruit fly).